The primary structure comprises 959 residues: Probable LRR receptor-like serine/threonine-protein kinase At5g37450 (959 aa).

The N-terminal stretch at 1 to 24 (MKEMMGVVGIILVVSSCCLSLLDA) is a signal peptide. Residues 25–565 (QEITHPTDVS…SGMSIGVSVG (541 aa)) are Extracellular-facing. Residues Asn-62, Asn-88, Asn-102, and Asn-123 are each glycosylated (N-linked (GlcNAc...) asparagine). 9 LRR repeats span residues 79 to 100 (VKEL…LGLL), 101 to 124 (SNLT…LGNL), 125 to 148 (THLI…LGSL), 149 to 172 (SNLL…LANL), 173 to 198 (KKLK…TLTN), 200 to 220 (LHFL…LAQM), 221 to 244 (PSLR…SYGS), 246 to 268 (PNLV…LSKS), and 269 to 292 (LVLY…KFSA). N-linked (GlcNAc...) asparagine glycosylation is present at Asn-182. N-linked (GlcNAc...) asparagine glycosylation is found at Asn-293, Asn-311, Asn-327, Asn-358, Asn-369, and Asn-510. LRR repeat units follow at residues 294–314 (ITTI…NFSG), 315–338 (LPRL…IWEN), and 341–366 (LKAE…LLNP). Residues 566 to 586 (IIIGAIAFFLVLSSLALVFFI) form a helical membrane-spanning segment. The Cytoplasmic portion of the chain corresponds to 587–959 (KRSKRKRKTR…SGVIPSIAPR (373 aa)). Residues 631–906 (FSDLSQIGRG…RELENIYGLI (276 aa)) enclose the Protein kinase domain. ATP-binding positions include 637-645 (IGRGGYGKV) and Lys-659. Asp-755 (proton acceptor) is an active-site residue.

The protein belongs to the protein kinase superfamily. Ser/Thr protein kinase family.

The protein localises to the membrane. It carries out the reaction L-seryl-[protein] + ATP = O-phospho-L-seryl-[protein] + ADP + H(+). The enzyme catalyses L-threonyl-[protein] + ATP = O-phospho-L-threonyl-[protein] + ADP + H(+). The chain is Probable LRR receptor-like serine/threonine-protein kinase At5g37450 from Arabidopsis thaliana (Mouse-ear cress).